Consider the following 164-residue polypeptide: Lipoprotein signal peptidase (164 aa).

4 helical membrane passes run 2–22, 40–60, 70–90, and 99–119; these read MSLLTGTGLRWMWLAVFAIVL, VVITPFFNLVHVYNTGAAFSF, WLFSGLAIVISGVLAVAMAKA, and LAYSLVIGGAIGNLIDRVVYG. Catalysis depends on residues Asp123 and Asp142. A helical transmembrane segment spans residues 138–158; the sequence is FNVADMAISCGAVFIILDGFI.

It belongs to the peptidase A8 family.

The protein resides in the cell inner membrane. It carries out the reaction Release of signal peptides from bacterial membrane prolipoproteins. Hydrolyzes -Xaa-Yaa-Zaa-|-(S,diacylglyceryl)Cys-, in which Xaa is hydrophobic (preferably Leu), and Yaa (Ala or Ser) and Zaa (Gly or Ala) have small, neutral side chains.. It functions in the pathway protein modification; lipoprotein biosynthesis (signal peptide cleavage). Its function is as follows. This protein specifically catalyzes the removal of signal peptides from prolipoproteins. This is Lipoprotein signal peptidase from Tolumonas auensis (strain DSM 9187 / NBRC 110442 / TA 4).